An 86-amino-acid chain; its full sequence is Large ribosomal subunit protein bL27 (86 aa).

Belongs to the bacterial ribosomal protein bL27 family.

In Xanthomonas oryzae pv. oryzae (strain PXO99A), this protein is Large ribosomal subunit protein bL27.